The chain runs to 766 residues: Tetratricopeptide repeat protein 14 (766 aa).

The segment at 35-55 is disordered; it reads LGTAAEPARGAAPPPGAGRKE. Residues 125–207 form the S1 motif domain; the sequence is GDIVIGRISS…YHEKLAVSLY (83 aa). TPR repeat units lie at residues 209-242, 306-339, 341-373, and 381-414; these read SSLP…NSNS, ALKC…DKQN, EALV…CPTH, and CQTL…DETF. A disordered region spans residues 463-743; sequence EEKRLKKKRR…PDSRVKKNLP (281 aa). The span at 475–496 shows a compositional bias: low complexity; that stretch reads SSSSSVSSADESVSSSSSSSSS. Basic residues predominate over residues 497-506; that stretch reads SHKRHKKSKR. Positions 539–550 are enriched in polar residues; that stretch reads PTNTSASFLNQK. Basic and acidic residues predominate over residues 551–562; sequence QEVEKLLEKQDR. Polar residues predominate over residues 594–605; the sequence is FYNSYKTQAGSS. 2 stretches are compositionally biased toward basic and acidic residues: residues 606–616 and 629–657; these read KTEKPYKSERH and NSED…RRWE. A compositionally biased stretch (polar residues) spans 661-673; the sequence is VKYSTSPASSDYS. Position 666 is a phosphoserine (Ser666). Over residues 707–738 the composition is skewed to basic and acidic residues; the sequence is RVYEKEDSCGEGNRNEAPEEMLNSKEQPDSRV.

The protein belongs to the TTC14 family.

This chain is Tetratricopeptide repeat protein 14, found in Mus musculus (Mouse).